The primary structure comprises 342 residues: tRNA-specific 2-thiouridylase MnmA (342 aa).

Residues 6-13 and L32 contribute to the ATP site; that span reads LLSGGVDS. C92 (nucleophile) is an active-site residue. Residues C92 and C191 are joined by a disulfide bond. G116 is a binding site for ATP. The interaction with tRNA stretch occupies residues 138-140; the sequence is KDQ. Catalysis depends on C191, which acts as the Cysteine persulfide intermediate. Residues 293–294 are interaction with tRNA; the sequence is RY.

It belongs to the MnmA/TRMU family.

Its subcellular location is the cytoplasm. The enzyme catalyses S-sulfanyl-L-cysteinyl-[protein] + uridine(34) in tRNA + AH2 + ATP = 2-thiouridine(34) in tRNA + L-cysteinyl-[protein] + A + AMP + diphosphate + H(+). In terms of biological role, catalyzes the 2-thiolation of uridine at the wobble position (U34) of tRNA, leading to the formation of s(2)U34. This is tRNA-specific 2-thiouridylase MnmA from Helicobacter acinonychis (strain Sheeba).